The sequence spans 198 residues: Acireductone dioxygenase 2 (198 aa).

4 residues coordinate Fe(2+): histidine 99, histidine 101, glutamate 105, and histidine 144. Ni(2+) contacts are provided by histidine 99, histidine 101, glutamate 105, and histidine 144.

This sequence belongs to the acireductone dioxygenase (ARD) family. The cofactor is Fe(2+). It depends on Ni(2+) as a cofactor. As to expression, ubiquitous.

It localises to the cytoplasm. The protein localises to the nucleus. The enzyme catalyses 1,2-dihydroxy-5-(methylsulfanyl)pent-1-en-3-one + O2 = 4-methylsulfanyl-2-oxobutanoate + formate + 2 H(+). It catalyses the reaction 1,2-dihydroxy-5-(methylsulfanyl)pent-1-en-3-one + O2 = 3-(methylsulfanyl)propanoate + CO + formate + 2 H(+). The protein operates within amino-acid biosynthesis; L-methionine biosynthesis via salvage pathway; L-methionine from S-methyl-5-thio-alpha-D-ribose 1-phosphate: step 5/6. Functionally, catalyzes 2 different reactions between oxygen and the acireductone 1,2-dihydroxy-3-keto-5-methylthiopentene (DHK-MTPene) depending upon the metal bound in the active site. Fe-containing acireductone dioxygenase (Fe-ARD) produces formate and 2-keto-4-methylthiobutyrate (KMTB), the alpha-ketoacid precursor of methionine in the methionine recycle pathway. Ni-containing acireductone dioxygenase (Ni-ARD) produces methylthiopropionate, carbon monoxide and formate, and does not lie on the methionine recycle pathway. This Oryza sativa subsp. indica (Rice) protein is Acireductone dioxygenase 2 (ARD2).